A 186-amino-acid polypeptide reads, in one-letter code: Ribosome-recycling factor (186 aa).

It belongs to the RRF family.

It is found in the cytoplasm. Functionally, responsible for the release of ribosomes from messenger RNA at the termination of protein biosynthesis. May increase the efficiency of translation by recycling ribosomes from one round of translation to another. In Chlorobium luteolum (strain DSM 273 / BCRC 81028 / 2530) (Pelodictyon luteolum), this protein is Ribosome-recycling factor.